Consider the following 257-residue polypeptide: Imidazole glycerol phosphate synthase subunit HisF (257 aa).

Catalysis depends on residues D12 and D131.

The protein belongs to the HisA/HisF family. As to quaternary structure, heterodimer of HisH and HisF.

Its subcellular location is the cytoplasm. The catalysed reaction is 5-[(5-phospho-1-deoxy-D-ribulos-1-ylimino)methylamino]-1-(5-phospho-beta-D-ribosyl)imidazole-4-carboxamide + L-glutamine = D-erythro-1-(imidazol-4-yl)glycerol 3-phosphate + 5-amino-1-(5-phospho-beta-D-ribosyl)imidazole-4-carboxamide + L-glutamate + H(+). The protein operates within amino-acid biosynthesis; L-histidine biosynthesis; L-histidine from 5-phospho-alpha-D-ribose 1-diphosphate: step 5/9. In terms of biological role, IGPS catalyzes the conversion of PRFAR and glutamine to IGP, AICAR and glutamate. The HisF subunit catalyzes the cyclization activity that produces IGP and AICAR from PRFAR using the ammonia provided by the HisH subunit. In Rhodococcus erythropolis (strain PR4 / NBRC 100887), this protein is Imidazole glycerol phosphate synthase subunit HisF.